A 91-amino-acid polypeptide reads, in one-letter code: MATKKSGGSSCNGRDSRGRRLGVKKFGSELVIPGNIIIRQRGTKYHPGKNVGIGRDHTIFSKIAGVVSFRRKAEGRVFVDVLPESVSASLS.

Polar residues predominate over residues methionine 1–glycine 13. Residues methionine 1–arginine 20 are disordered.

It belongs to the bacterial ribosomal protein bL27 family.

The protein is Large ribosomal subunit protein bL27 of Anaplasma phagocytophilum (strain HZ).